We begin with the raw amino-acid sequence, 722 residues long: DUF724 domain-containing protein 7 (722 aa).

The interval 424–449 is disordered; it reads KTTPKKKLQAMKNQKSSTNDSVGEKV. The span at 434–444 shows a compositional bias: polar residues; the sequence is MKNQKSSTNDS. In terms of domain architecture, DUF724 spans 540–720; the sequence is VLPFVKKSQL…HEFQAILAAP (181 aa). The stretch at 645 to 712 forms a coiled coil; sequence CALEELKAVE…DQEVQNVDHE (68 aa).

As to quaternary structure, homodimer. Interacts wtih ABAP1, ARIA and LHP1. Interacts with the non-modified histones H1, H2B, H3 and H4. In terms of tissue distribution, expressed in roots, leaves, stems and flowers.

Its subcellular location is the nucleus. In terms of biological role, may act as a link between DNA replication, transcription and chromatin remodeling during flower development. May participate in the repression of LHP1-targeted genes during flower development by direct interaction with LHP1. May be involved in the polar growth of plant cells via transportation of RNAs. This is DUF724 domain-containing protein 7 from Arabidopsis thaliana (Mouse-ear cress).